A 219-amino-acid polypeptide reads, in one-letter code: Protein-L-isoaspartate O-methyltransferase 2 (219 aa).

Serine 66 is an active-site residue.

It belongs to the methyltransferase superfamily. L-isoaspartyl/D-aspartyl protein methyltransferase family.

Its subcellular location is the cytoplasm. The catalysed reaction is [protein]-L-isoaspartate + S-adenosyl-L-methionine = [protein]-L-isoaspartate alpha-methyl ester + S-adenosyl-L-homocysteine. Catalyzes the methyl esterification of L-isoaspartyl residues in peptides and proteins that result from spontaneous decomposition of normal L-aspartyl and L-asparaginyl residues. It plays a role in the repair and/or degradation of damaged proteins. The sequence is that of Protein-L-isoaspartate O-methyltransferase 2 from Marinobacter nauticus (strain ATCC 700491 / DSM 11845 / VT8) (Marinobacter aquaeolei).